The chain runs to 152 residues: Small ribosomal subunit protein uS15 (152 aa).

Basic residues predominate over residues 1-19 (MAKMHTRRKGRSRSTRPVR). The tract at residues 1–21 (MAKMHTRRKGRSRSTRPVRKT) is disordered.

It belongs to the universal ribosomal protein uS15 family. Part of the 30S ribosomal subunit.

The sequence is that of Small ribosomal subunit protein uS15 from Methanocella arvoryzae (strain DSM 22066 / NBRC 105507 / MRE50).